Reading from the N-terminus, the 294-residue chain is 33 kDa chaperonin (294 aa).

2 cysteine pairs are disulfide-bonded: cysteine 238/cysteine 240 and cysteine 271/cysteine 274.

This sequence belongs to the HSP33 family. Post-translationally, under oxidizing conditions two disulfide bonds are formed involving the reactive cysteines. Under reducing conditions zinc is bound to the reactive cysteines and the protein is inactive.

The protein resides in the cytoplasm. Its function is as follows. Redox regulated molecular chaperone. Protects both thermally unfolding and oxidatively damaged proteins from irreversible aggregation. Plays an important role in the bacterial defense system toward oxidative stress. This is 33 kDa chaperonin from Clostridium tetani (strain Massachusetts / E88).